Reading from the N-terminus, the 138-residue chain is Large ribosomal subunit protein uL16 (138 aa).

Positions 1–16 (MLIPRRVKHRKQHHPG) are enriched in basic residues. A disordered region spans residues 1 to 25 (MLIPRRVKHRKQHHPGRSGAATGGT).

This sequence belongs to the universal ribosomal protein uL16 family. In terms of assembly, part of the 50S ribosomal subunit.

Binds 23S rRNA and is also seen to make contacts with the A and possibly P site tRNAs. The polypeptide is Large ribosomal subunit protein uL16 (Pseudarthrobacter chlorophenolicus (strain ATCC 700700 / DSM 12829 / CIP 107037 / JCM 12360 / KCTC 9906 / NCIMB 13794 / A6) (Arthrobacter chlorophenolicus)).